Here is an 83-residue protein sequence, read N- to C-terminus: Small ribosomal subunit protein bS16 (83 aa).

This sequence belongs to the bacterial ribosomal protein bS16 family.

The sequence is that of Small ribosomal subunit protein bS16 from Albidiferax ferrireducens (strain ATCC BAA-621 / DSM 15236 / T118) (Rhodoferax ferrireducens).